The following is a 1081-amino-acid chain: Teashirt homolog 3 (1081 aa).

3 disordered regions span residues 25–104 (LVED…EVQV), 141–161 (PSSE…SSCG), and 238–257 (HYRD…WSKP). Residues 26 to 37 (VEDDVEPEEQAA) show a composition bias toward acidic residues. The span at 68–87 (SSHEMDSESHISETSDRMAD) shows a compositional bias: basic and acidic residues. 2 C2H2-type zinc fingers span residues 214 to 238 (FRCK…ETGH) and 275 to 299 (LKCM…KTKH). The segment covering 238–247 (HYRDDNHETD) has biased composition (basic and acidic residues). The segment at 325–346 (SLELELPSSPDSTGGTPKATLS) is disordered. The segment at 387–410 (KCMECGSSHDTLQELTAHMMVTGH) adopts a C2H2-type 3; atypical zinc-finger fold. The span at 474 to 491 (VDKEKAVPDEKPKEREKP) shows a compositional bias: basic and acidic residues. Disordered stretches follow at residues 474 to 499 (VDKE…EKYD), 626 to 699 (EKMK…KPLS), 792 to 824 (LTKG…TVTT), and 855 to 897 (TESH…RQSN). Positions 606–630 (NFHAMEELVKKVTEKVAKVEEKMKE) form a coiled coil. A compositionally biased stretch (polar residues) spans 660–670 (SDGSFKSQENS). Residue Ser-682 is modified to Phosphoserine. Low complexity-rich tracts occupy residues 800-824 (GCSL…TVTT) and 856-869 (ESHT…SSIS). Residues 891-961 (RKGRQSNWNP…NVKYQLRRTG (71 aa)) constitute a DNA-binding region (homeobox; atypical). 2 consecutive C2H2-type zinc fingers follow at residues 976-998 (FFCN…LESH) and 1041-1064 (YQCK…SKTH).

This sequence belongs to the teashirt C2H2-type zinc-finger protein family. As to quaternary structure, interacts (via N-terminus) with HDAC1 and HDAC2; the interaction is direct. Found in a trimeric complex with APBB1 and HDAC1; the interaction between HDAC1 and APBB1 is mediated by TSHZ3. Interacts (via homeobox domain) with APBB1 (via PID domain 1). Expressed in corticostriatal neurons.

The protein resides in the nucleus. Its subcellular location is the cell projection. It is found in the growth cone. In terms of biological role, transcriptional regulator involved in developmental processes. Functions in association with APBB1, SET and HDAC factors as a transcriptional repressor, that inhibits the expression of CASP4. TSHZ3-mediated transcription repression involves the recruitment of histone deacetylases HDAC1 and HDAC2. Associates with chromatin in a region surrounding the CASP4 transcriptional start site(s). Regulates the development of neurons involved in both respiratory rhythm and airflow control. Promotes maintenance of nucleus ambiguus (nA) motoneurons, which govern upper airway function, and establishes a respiratory rhythm generator (RRG) activity compatible with survival at birth. Involved in the differentiation of the proximal uretic smooth muscle cells during developmental processes. Involved in the up-regulation of myocardin, that directs the expression of smooth muscle cells in the proximal ureter. Involved in the modulation of glutamatergic synaptic transmission and long-term synaptic potentiation. In Mus musculus (Mouse), this protein is Teashirt homolog 3 (Tshz3).